We begin with the raw amino-acid sequence, 94 residues long: Protein RnfH (94 aa).

Belongs to the UPF0125 (RnfH) family.

The protein is Protein RnfH of Serratia proteamaculans (strain 568).